The primary structure comprises 269 residues: MDTRRRVWPVAIITPHVTDVFAQRATLTRSLQLLSEFRYEQPYPARFYRALAADTVAMVGDLWLSTHGAPPVGRILLDVGSGSGYFAAAFADAGVRYIGVEPDPREMHAAGPALVPKAGAFVRASGMALPFADDAVDICLSSNVAEHVPQPWQLGNEMLRVTKPGGLVVLSYTIWLGPFGGHEMGLTHYLGGARAATRYVRKHGHRAKNDYGSSLFPVSAADGLNWAASTGVAVAAFPRYHPRWAWWLTSVPVLREFVVSNLVLVLRPR.

Belongs to the methyltransferase superfamily.

This is an uncharacterized protein from Mycobacterium leprae (strain Br4923).